The chain runs to 235 residues: Claudin-16 (235 aa).

The Cytoplasmic segment spans residues 1-3; sequence MRD. A helical transmembrane segment spans residues 4–24; it reads LLQYIACFFAFFSAGFLIVAT. The Extracellular segment spans residues 25–79; sequence WTDCWMVNADDSLEVSTKCRGLWWECVTNAFDGIRTCDEYDSILAEHPLKLVVTR. The chain crosses the membrane as a helical span at residues 80 to 100; it reads ALMITADILAGFGFLTLLLGL. Residues 101–115 lie on the Cytoplasmic side of the membrane; the sequence is DCVKFLPDEPYIKVR. The chain crosses the membrane as a helical span at residues 116–136; the sequence is ICFVAGATLLIAGTPGIIGSV. Residues 137-169 lie on the Extracellular side of the membrane; that stretch reads WYAVDVYVERSTLVLHNIFLGIQYKFGWSCWLG. The chain crosses the membrane as a helical span at residues 170–190; sequence MAGSLGCFLAGAVLTCCLYLF. Residues 191 to 235 lie on the Cytoplasmic side of the membrane; it reads KDVGPERNYPYSLRKAYSAAGVSMAKSYSAPRTETAKMYAVDTRV. An Interaction with TJP1 motif is present at residues 233–235; the sequence is TRV.

The protein belongs to the claudin family. In terms of assembly, can form heteropolymeric tight junction strands with other claudins. Interacts with CLDN19. Interacts (via PDZ-binding motif TRV) with TJP1 (via PDZ domain). Cannot form tight junction strands on its own. As to expression, kidney-specific, including the thick ascending limb of Henle (TAL).

It localises to the cell junction. The protein localises to the tight junction. Its subcellular location is the cell membrane. The catalysed reaction is Mg(2+)(in) = Mg(2+)(out). It catalyses the reaction Ca(2+)(in) = Ca(2+)(out). The enzyme catalyses Na(+)(in) = Na(+)(out). It carries out the reaction K(+)(in) = K(+)(out). The catalysed reaction is Rb(+)(in) = Rb(+)(out). It catalyses the reaction Cs(+)(in) = Cs(+)(out). The enzyme catalyses Li(+)(in) = Li(+)(out). Functionally, forms paracellular channels: coassembles with CLDN19 into tight junction strands with cation-selective channels through the strands, conveying epithelial permeability in a process known as paracellular tight junction permeability. Involved in the maintenance of ion gradients along the nephron. In the thick ascending limb (TAL) of Henle's loop, facilitates sodium paracellular permeability from the interstitial compartment to the lumen, contributing to the lumen-positive transepithelial potential that drives paracellular magnesium and calcium reabsorption. The polypeptide is Claudin-16 (Homo sapiens (Human)).